The following is a 417-amino-acid chain: MSSNNVPASRRKCVGVKVGSVMIGGGAPIVVQSMTNTDTADEVSTTQQVAQLALAGSELVRITVNSMEAARAVAGIRARLDDMGCHVPLVGDFHFNGHKLLTAYPECARALAKYRINPGNVGHGRKRDEQFSLLIETACKYDKPVRIGVNWGSLDPEMLARIMDENARSPDPLGASQVMHKALITSALESAARAEELGLARDHIVLSCKVSGVARQQDMIAVYGALAEQCDYALHLGLTEAGMGSKGIVASTAALAVLLFKGIGDTIRVSLTPEPGGDRAREVIVAQEILQTMGLRAFVPLVAACPGCGRTTSTYFQELAESIQIYVREQMVIWREQYEGVENMSLAVMGCVVNGPGESKHADIGISLPGSGETPVAPVFVDGQKTVTLKGDNIAGEFRMIVDEYVRTKYRKKAANA.

The [4Fe-4S] cluster site is built by Cys305, Cys308, Cys351, and Glu358.

This sequence belongs to the IspG family. [4Fe-4S] cluster serves as cofactor.

The catalysed reaction is (2E)-4-hydroxy-3-methylbut-2-enyl diphosphate + oxidized [flavodoxin] + H2O + 2 H(+) = 2-C-methyl-D-erythritol 2,4-cyclic diphosphate + reduced [flavodoxin]. The protein operates within isoprenoid biosynthesis; isopentenyl diphosphate biosynthesis via DXP pathway; isopentenyl diphosphate from 1-deoxy-D-xylulose 5-phosphate: step 5/6. Converts 2C-methyl-D-erythritol 2,4-cyclodiphosphate (ME-2,4cPP) into 1-hydroxy-2-methyl-2-(E)-butenyl 4-diphosphate. This Nitrosomonas europaea (strain ATCC 19718 / CIP 103999 / KCTC 2705 / NBRC 14298) protein is 4-hydroxy-3-methylbut-2-en-1-yl diphosphate synthase (flavodoxin).